The following is a 910-amino-acid chain: Valine--tRNA ligase (910 aa).

A 'HIGH' region motif is present at residues 46–56; the sequence is PNVTGSLHMGH. Residues 539 to 543 carry the 'KMSKS' region motif; the sequence is KMSKS. Lys-542 lines the ATP pocket. Residues 845–909 are a coiled coil; that stretch reads DLDILRNKIQ…QMLQERLKML (65 aa).

This sequence belongs to the class-I aminoacyl-tRNA synthetase family. ValS type 1 subfamily. Monomer.

It is found in the cytoplasm. The enzyme catalyses tRNA(Val) + L-valine + ATP = L-valyl-tRNA(Val) + AMP + diphosphate. In terms of biological role, catalyzes the attachment of valine to tRNA(Val). As ValRS can inadvertently accommodate and process structurally similar amino acids such as threonine, to avoid such errors, it has a 'posttransfer' editing activity that hydrolyzes mischarged Thr-tRNA(Val) in a tRNA-dependent manner. The chain is Valine--tRNA ligase from Synechocystis sp. (strain ATCC 27184 / PCC 6803 / Kazusa).